A 164-amino-acid chain; its full sequence is UPF0262 protein Saro_0143 (164 aa).

Belongs to the UPF0262 family.

The polypeptide is UPF0262 protein Saro_0143 (Novosphingobium aromaticivorans (strain ATCC 700278 / DSM 12444 / CCUG 56034 / CIP 105152 / NBRC 16084 / F199)).